The sequence spans 697 residues: Transmembrane protein 168 (697 aa).

A run of 3 helical transmembrane segments spans residues 36–56, 63–83, and 89–109; these read LGYL…YVRW, LILV…ILYY, and AASL…LCFL. A glycan (N-linked (GlcNAc...) asparagine) is linked at N111. The next 5 membrane-spanning stretches (helical) occupy residues 172–192, 199–219, 223–243, 265–285, and 293–313; these read MLVE…MLII, FLAI…SLET, PIAF…DIYF, LSVL…AFKL, and FVIP…IIFL. N-linked (GlcNAc...) asparagine glycosylation occurs at N337. Transmembrane regions (helical) follow at residues 352 to 372 and 380 to 400; these read FCLI…ILGA and GIFL…HGLF. Residues N533 and N598 are each glycosylated (N-linked (GlcNAc...) asparagine).

This sequence belongs to the TMEM168 family.

Its subcellular location is the nucleus membrane. Plays a key role in maintaining the cardiac electrical stability by modulating cell surface expression of SCN5A. Plays a role i the modulation of anxiety behavior by regulating GABAergic neuronal system in the nucleus accumbens. In Mus musculus (Mouse), this protein is Transmembrane protein 168 (Tmem168).